The primary structure comprises 405 residues: Peroxisomal membrane protein PEX13 (405 aa).

A compositionally biased stretch (pro residues) spans 1–11; it reads MASQPPPPPKP. The tract at residues 1–71 is disordered; that stretch reads MASQPPPPPK…SQQTGSNNVN (71 aa). Residues 1 to 136 are Peroxisomal matrix-facing; it reads MASQPPPPPK…SSRGAFQSIE (136 aa). Residues 61-71 show a composition bias toward polar residues; it reads PSQQTGSNNVN. Residues 137–157 form a helical membrane-spanning segment; sequence SIVHAFASVSMMMDATFSAVY. The tract at residues 147–235 is targeting to peroxisomes; it reads MMMDATFSAV…EDQATNSAKS (89 aa). The Cytoplasmic portion of the chain corresponds to 158–176; that stretch reads NSFRAVLDVANHFSRLKIH. Residues 177 to 194 form a helical membrane-spanning segment; it reads FTKVFSAFALVRTIRYLY. The segment at 177-198 is interaction with PEX19; the sequence is FTKVFSAFALVRTIRYLYRRLQ. Over 195–235 the chain is Peroxisomal matrix; it reads RRLQWMMGLRRGSENEDLWAESEGTVACLSAEDQATNSAKS. A helical membrane pass occupies residues 236 to 256; the sequence is WPIFLFFAVILGGPYLIWKLL. The Cytoplasmic portion of the chain corresponds to 257–405; it reads STHNDEVTDN…TGKNGDKQDL (149 aa). One can recognise an SH3 domain in the interval 274–338; sequence DDHVVARAEY…PANYVKILGK (65 aa). At S356 the chain carries Phosphoserine.

This sequence belongs to the peroxin-13 family. Interacts (via SH3 domain) with PEX14 (via SH3-binding motif); forming the PEX13-PEX14 docking complex. Interacts with PEX19.

The protein localises to the peroxisome membrane. In terms of biological role, component of the PEX13-PEX14 docking complex, a translocon channel that specifically mediates the import of peroxisomal cargo proteins bound to PEX5 receptor. The PEX13-PEX14 docking complex forms a large import pore which can be opened to a diameter of about 9 nm. Mechanistically, PEX5 receptor along with cargo proteins associates with the PEX14 subunit of the PEX13-PEX14 docking complex in the cytosol, leading to the insertion of the receptor into the organelle membrane with the concomitant translocation of the cargo into the peroxisome matrix. Involved in the import of PTS1- and PTS2-type containing proteins. In Mus musculus (Mouse), this protein is Peroxisomal membrane protein PEX13.